The sequence spans 263 residues: L-aspartate dehydrogenase (263 aa).

Residues Ala120 and Asn186 each coordinate NAD(+). The active site involves His216.

This sequence belongs to the L-aspartate dehydrogenase family.

It carries out the reaction L-aspartate + NADP(+) + H2O = oxaloacetate + NH4(+) + NADPH + H(+). The catalysed reaction is L-aspartate + NAD(+) + H2O = oxaloacetate + NH4(+) + NADH + H(+). It functions in the pathway cofactor biosynthesis; NAD(+) biosynthesis; iminoaspartate from L-aspartate (dehydrogenase route): step 1/1. Functionally, specifically catalyzes the NAD or NADP-dependent dehydrogenation of L-aspartate to iminoaspartate. In Psychrobacter cryohalolentis (strain ATCC BAA-1226 / DSM 17306 / VKM B-2378 / K5), this protein is L-aspartate dehydrogenase.